A 451-amino-acid chain; its full sequence is NADP-specific glutamate dehydrogenase (451 aa).

The active site involves lysine 113. Serine 252 is modified (phosphoserine).

Belongs to the Glu/Leu/Phe/Val dehydrogenases family. As to quaternary structure, homohexamer.

It carries out the reaction L-glutamate + NADP(+) + H2O = 2-oxoglutarate + NH4(+) + NADPH + H(+). In Schizosaccharomyces pombe (strain 972 / ATCC 24843) (Fission yeast), this protein is NADP-specific glutamate dehydrogenase (gdh1).